A 91-amino-acid chain; its full sequence is Small ribosomal subunit protein bS16 (91 aa).

It belongs to the bacterial ribosomal protein bS16 family.

The protein is Small ribosomal subunit protein bS16 of Streptococcus mutans serotype c (strain ATCC 700610 / UA159).